A 373-amino-acid chain; its full sequence is 3 beta-hydroxysteroid dehydrogenase/Delta 5--&gt;4-isomerase type 2 (373 aa).

Y155 acts as the Proton acceptor in catalysis. NAD(+) is bound at residue K159. Residues 288 to 308 (VPLLYWLAFLLETVSFLLSPI) traverse the membrane as a helical segment.

This sequence belongs to the 3-beta-HSD family. Liver and kidney.

The protein localises to the endoplasmic reticulum membrane. It localises to the mitochondrion membrane. It catalyses the reaction a 3beta-hydroxy-Delta(5)-steroid + NAD(+) = a 3-oxo-Delta(5)-steroid + NADH + H(+). The enzyme catalyses a 3-oxo-Delta(5)-steroid = a 3-oxo-Delta(4)-steroid. It carries out the reaction pregnenolone + NAD(+) = pregn-5-ene-3,20-dione + NADH + H(+). The catalysed reaction is pregn-5-ene-3,20-dione = progesterone. It catalyses the reaction 3beta-hydroxyandrost-5-en-17-one + NAD(+) = androst-5-ene-3,17-dione + NADH + H(+). The enzyme catalyses androst-5-ene-3,17-dione = androst-4-ene-3,17-dione. Its pathway is lipid metabolism; steroid biosynthesis. Functionally, 3-beta-HSD is a bifunctional enzyme, that catalyzes the oxidative conversion of Delta(5)-ene-3-beta-hydroxy steroid, and the oxidative conversion of ketosteroids. The 3-beta-HSD enzymatic system plays a crucial role in the biosynthesis of all classes of hormonal steroids. This Mus musculus (Mouse) protein is 3 beta-hydroxysteroid dehydrogenase/Delta 5--&gt;4-isomerase type 2.